We begin with the raw amino-acid sequence, 1589 residues long: Pentafunctional AROM polypeptide (1589 aa).

A 3-dehydroquinate synthase region spans residues 1–384 (MAAPTTIKIL…HEQQASVVSN (384 aa)). NAD(+) is bound by residues 44 to 46 (DTT), 81 to 84 (ELSK), 114 to 116 (GGV), and Asp119. A 7-phospho-2-dehydro-3-deoxy-D-arabino-heptonate-binding site is contributed by Arg130. 139–140 (TT) serves as a coordination point for NAD(+). 7-phospho-2-dehydro-3-deoxy-D-arabino-heptonate contacts are provided by Asp146 and Lys152. Lys161 is a binding site for NAD(+). Residue Asn162 participates in 7-phospho-2-dehydro-3-deoxy-D-arabino-heptonate binding. Residues 179–182 (FLNT) and Asn190 contribute to the NAD(+) site. A Zn(2+)-binding site is contributed by Glu194. Residues 194–197 (EVIK) and Lys250 contribute to the 7-phospho-2-dehydro-3-deoxy-D-arabino-heptonate site. The active-site Proton acceptor; for 3-dehydroquinate synthase activity is the Glu260. 7-phospho-2-dehydro-3-deoxy-D-arabino-heptonate is bound by residues 264-268 (RNLLN) and His271. Position 271 (His271) interacts with Zn(2+). The active-site Proton acceptor; for 3-dehydroquinate synthase activity is His275. Residues His287 and Lys356 each contribute to the 7-phospho-2-dehydro-3-deoxy-D-arabino-heptonate site. His287 provides a ligand contact to Zn(2+). Residues 397 to 841 (VSPGVPKSLQ…WDTLAQLFKA (445 aa)) form an EPSP synthase region. Cys823 serves as the catalytic For EPSP synthase activity. Residues 861–1052 (ASIFIIGMRG…KKKPQSFFVS (192 aa)) are shikimate kinase. 867-874 (GMRGAGKT) contacts ATP. Residues 1053-1273 (LTLPDLRPSA…AAPGQLSAQD (221 aa)) form a 3-dehydroquinase region. Catalysis depends on His1176, which acts as the Proton acceptor; for 3-dehydroquinate dehydratase activity. Lys1204 acts as the Schiff-base intermediate with substrate; for 3-dehydroquinate dehydratase activity in catalysis. The tract at residues 1286–1589 (PRKFAIFGKP…VMNPGTDNRG (304 aa)) is shikimate dehydrogenase.

In the N-terminal section; belongs to the sugar phosphate cyclases superfamily. Dehydroquinate synthase family. It in the 2nd section; belongs to the EPSP synthase family. This sequence in the 3rd section; belongs to the shikimate kinase family. The protein in the 4th section; belongs to the type-I 3-dehydroquinase family. In the C-terminal section; belongs to the shikimate dehydrogenase family. Homodimer. It depends on Zn(2+) as a cofactor.

The protein resides in the cytoplasm. It carries out the reaction 7-phospho-2-dehydro-3-deoxy-D-arabino-heptonate = 3-dehydroquinate + phosphate. The enzyme catalyses 3-dehydroquinate = 3-dehydroshikimate + H2O. It catalyses the reaction shikimate + NADP(+) = 3-dehydroshikimate + NADPH + H(+). The catalysed reaction is shikimate + ATP = 3-phosphoshikimate + ADP + H(+). It carries out the reaction 3-phosphoshikimate + phosphoenolpyruvate = 5-O-(1-carboxyvinyl)-3-phosphoshikimate + phosphate. The protein operates within metabolic intermediate biosynthesis; chorismate biosynthesis; chorismate from D-erythrose 4-phosphate and phosphoenolpyruvate: step 2/7. It participates in metabolic intermediate biosynthesis; chorismate biosynthesis; chorismate from D-erythrose 4-phosphate and phosphoenolpyruvate: step 3/7. It functions in the pathway metabolic intermediate biosynthesis; chorismate biosynthesis; chorismate from D-erythrose 4-phosphate and phosphoenolpyruvate: step 4/7. Its pathway is metabolic intermediate biosynthesis; chorismate biosynthesis; chorismate from D-erythrose 4-phosphate and phosphoenolpyruvate: step 5/7. The protein operates within metabolic intermediate biosynthesis; chorismate biosynthesis; chorismate from D-erythrose 4-phosphate and phosphoenolpyruvate: step 6/7. Its function is as follows. The AROM polypeptide catalyzes 5 consecutive enzymatic reactions in prechorismate polyaromatic amino acid biosynthesis. This chain is Pentafunctional AROM polypeptide, found in Coccidioides posadasii (strain C735) (Valley fever fungus).